A 359-amino-acid chain; its full sequence is Nicotinate-nucleotide--dimethylbenzimidazole phosphoribosyltransferase (359 aa).

E318 (proton acceptor) is an active-site residue.

Belongs to the CobT family. Homodimer.

The catalysed reaction is 5,6-dimethylbenzimidazole + nicotinate beta-D-ribonucleotide = alpha-ribazole 5'-phosphate + nicotinate + H(+). It participates in nucleoside biosynthesis; alpha-ribazole biosynthesis; alpha-ribazole from 5,6-dimethylbenzimidazole: step 1/2. Its function is as follows. Catalyzes the synthesis of alpha-ribazole-5'-phosphate from nicotinate mononucleotide (NAMN) and 5,6-dimethylbenzimidazole (DMB). In Escherichia coli (strain UTI89 / UPEC), this protein is Nicotinate-nucleotide--dimethylbenzimidazole phosphoribosyltransferase.